The sequence spans 245 residues: 1-(5-phosphoribosyl)-5-[(5-phosphoribosylamino)methylideneamino] imidazole-4-carboxamide isomerase (245 aa).

Catalysis depends on Asp8, which acts as the Proton acceptor. The active-site Proton donor is the Asp129.

The protein belongs to the HisA/HisF family.

It is found in the cytoplasm. It carries out the reaction 1-(5-phospho-beta-D-ribosyl)-5-[(5-phospho-beta-D-ribosylamino)methylideneamino]imidazole-4-carboxamide = 5-[(5-phospho-1-deoxy-D-ribulos-1-ylimino)methylamino]-1-(5-phospho-beta-D-ribosyl)imidazole-4-carboxamide. It functions in the pathway amino-acid biosynthesis; L-histidine biosynthesis; L-histidine from 5-phospho-alpha-D-ribose 1-diphosphate: step 4/9. The protein is 1-(5-phosphoribosyl)-5-[(5-phosphoribosylamino)methylideneamino] imidazole-4-carboxamide isomerase of Pelobacter propionicus (strain DSM 2379 / NBRC 103807 / OttBd1).